A 395-amino-acid chain; its full sequence is Allantoicase (395 aa).

Belongs to the allantoicase family.

The catalysed reaction is allantoate + H2O = (S)-ureidoglycolate + urea. It participates in nitrogen metabolism; (S)-allantoin degradation; (S)-ureidoglycolate from allantoate (aminidohydrolase route): step 1/1. Utilization of purines as secondary nitrogen sources, when primary sources are limiting. The chain is Allantoicase (allc) from Danio rerio (Zebrafish).